The sequence spans 100 residues: Nucleoid-associated protein Caur_0522 (100 aa).

This sequence belongs to the YbaB/EbfC family. As to quaternary structure, homodimer.

It localises to the cytoplasm. Its subcellular location is the nucleoid. Binds to DNA and alters its conformation. May be involved in regulation of gene expression, nucleoid organization and DNA protection. This chain is Nucleoid-associated protein Caur_0522, found in Chloroflexus aurantiacus (strain ATCC 29366 / DSM 635 / J-10-fl).